Reading from the N-terminus, the 630-residue chain is Multidrug transporter TPO3 (630 aa).

The segment covering 1 to 35 (MVDQESLVSFSSETSQSINSDIDIESQQQPRQYIP) has biased composition (polar residues). Disordered stretches follow at residues 1 to 46 (MVDQ…KERL) and 107 to 157 (TSTA…NQQP). Residues 37–46 (NEKDGNKERL) show a composition bias toward basic and acidic residues. Residues 125 to 137 (RRSQNIAASSNSS) show a composition bias toward low complexity. Asn135 is a glycosylation site (N-linked (GlcNAc...) asparagine). Helical transmembrane passes span 190–210 (ILSCLVICVAYGSACITGGLF), 222–242 (AAILSCSLMVIGFSLGPLIWS), 252–272 (LAYFISMGLYTIFNIPCALSP), 282–302 (FLCGVFSSSGLCLVGGSIADM), 312–332 (IAFFAFAPYTGPIIGPLVNGF), 342–362 (LIFWINMAFAGVMWIIVAFIP), 423–443 (FYVCLIYSLLYAFFFAFPVVF), 453–473 (LIGLMFIPILIGATMALATTF), 494–514 (LFGAMIGAPFAAAALWILGAT), 519–539 (IIWVGPASSGLAFGYGMVLIY), 553–575 (YASSALATKVFLRSAGGAAFPLF), and 587–607 (WASWLLAFISTAMILLPFGFY).

This sequence belongs to the major facilitator superfamily. DHA1 family. Polyamines/proton antiporter (TC 2.A.1.2.16) subfamily.

The protein localises to the cell membrane. Cell membrane polyamine/proton antiporter, involved in the detoxification of excess polyamines in the cytoplasm. Involved in the resistance to the imidazole antifungal drugs tioconazole, miconazole, clotrimazole and ketoconazole; to the triazole fluconazole; but not to the antifungals flucytosine or amphotericin B. Plays a role in spermine homeostasis, but spermine accumulation in response to clotrimazole is independent of TPO3. This Candida glabrata (strain ATCC 2001 / BCRC 20586 / JCM 3761 / NBRC 0622 / NRRL Y-65 / CBS 138) (Yeast) protein is Multidrug transporter TPO3.